Reading from the N-terminus, the 177-residue chain is Adenine phosphoribosyltransferase (177 aa).

It belongs to the purine/pyrimidine phosphoribosyltransferase family. In terms of assembly, homodimer.

The protein resides in the cytoplasm. It catalyses the reaction AMP + diphosphate = 5-phospho-alpha-D-ribose 1-diphosphate + adenine. Its pathway is purine metabolism; AMP biosynthesis via salvage pathway; AMP from adenine: step 1/1. In terms of biological role, catalyzes a salvage reaction resulting in the formation of AMP, that is energically less costly than de novo synthesis. This is Adenine phosphoribosyltransferase from Rhodococcus opacus (strain B4).